The sequence spans 294 residues: Ribosomal protein L11 methyltransferase (294 aa).

S-adenosyl-L-methionine contacts are provided by T144, G165, D187, and N229.

The protein belongs to the methyltransferase superfamily. PrmA family.

The protein localises to the cytoplasm. It catalyses the reaction L-lysyl-[protein] + 3 S-adenosyl-L-methionine = N(6),N(6),N(6)-trimethyl-L-lysyl-[protein] + 3 S-adenosyl-L-homocysteine + 3 H(+). Methylates ribosomal protein L11. This is Ribosomal protein L11 methyltransferase from Pseudomonas paraeruginosa (strain DSM 24068 / PA7) (Pseudomonas aeruginosa (strain PA7)).